Here is a 297-residue protein sequence, read N- to C-terminus: Phosphatidylglycerol--prolipoprotein diacylglyceryl transferase (297 aa).

The next 4 membrane-spanning stretches (helical) occupy residues 20–40, 50–70, 105–125, and 133–153; these read FLTI…GLFV, INPL…IIGA, AVWE…LSII, and IHLK…QSIG. Arg-154 provides a ligand contact to a 1,2-diacyl-sn-glycero-3-phospho-(1'-sn-glycerol). The next 3 helical transmembrane spans lie at 193–213, 225–245, and 266–286; these read PTFL…IFVF, GFIS…IEGL, and AQFI…FLRL.

This sequence belongs to the Lgt family.

The protein localises to the cell inner membrane. The enzyme catalyses L-cysteinyl-[prolipoprotein] + a 1,2-diacyl-sn-glycero-3-phospho-(1'-sn-glycerol) = an S-1,2-diacyl-sn-glyceryl-L-cysteinyl-[prolipoprotein] + sn-glycerol 1-phosphate + H(+). It functions in the pathway protein modification; lipoprotein biosynthesis (diacylglyceryl transfer). Catalyzes the transfer of the diacylglyceryl group from phosphatidylglycerol to the sulfhydryl group of the N-terminal cysteine of a prolipoprotein, the first step in the formation of mature lipoproteins. The protein is Phosphatidylglycerol--prolipoprotein diacylglyceryl transferase of Prochlorococcus marinus (strain MIT 9312).